The following is a 383-amino-acid chain: 1-deoxy-D-xylulose 5-phosphate reductoisomerase (383 aa).

NADPH contacts are provided by T10, G11, S12, I13, G36, R37, N38, and N122. 1-deoxy-D-xylulose 5-phosphate is bound at residue K123. E124 is an NADPH binding site. Mn(2+) is bound at residue D148. S149, E150, S174, and H197 together coordinate 1-deoxy-D-xylulose 5-phosphate. E150 is a Mn(2+) binding site. An NADPH-binding site is contributed by G203. 4 residues coordinate 1-deoxy-D-xylulose 5-phosphate: S210, N215, K216, and E219. E219 lines the Mn(2+) pocket.

The protein belongs to the DXR family. The cofactor is Mg(2+). Mn(2+) serves as cofactor.

The catalysed reaction is 2-C-methyl-D-erythritol 4-phosphate + NADP(+) = 1-deoxy-D-xylulose 5-phosphate + NADPH + H(+). Its pathway is isoprenoid biosynthesis; isopentenyl diphosphate biosynthesis via DXP pathway; isopentenyl diphosphate from 1-deoxy-D-xylulose 5-phosphate: step 1/6. In terms of biological role, catalyzes the NADPH-dependent rearrangement and reduction of 1-deoxy-D-xylulose-5-phosphate (DXP) to 2-C-methyl-D-erythritol 4-phosphate (MEP). The sequence is that of 1-deoxy-D-xylulose 5-phosphate reductoisomerase from Bacillus subtilis (strain 168).